A 537-amino-acid polypeptide reads, in one-letter code: Probable sterol O-acyltransferase 1 (537 aa).

Transmembrane regions (helical) follow at residues 98-118 (FRGF…QLYA), 140-160 (FFVL…SYGL), 174-194 (LGYT…VYWV), and 199-219 (FPIV…MKQF). N-linked (GlcNAc...) asparagine glycosylation occurs at asparagine 250. A run of 2 helical transmembrane segments spans residues 344–364 (FGLL…SAVA) and 384–404 (IMFP…DCIL). The FYXDWWN motif signature appears at 418-424 (FYGAWWN). The next 2 membrane-spanning stretches (helical) occupy residues 462–482 (AVLL…LLAT) and 517–537 (VFFW…YIVF). Histidine 474 is a catalytic residue.

It belongs to the membrane-bound acyltransferase family. Sterol o-acyltransferase subfamily.

It localises to the endoplasmic reticulum membrane. In terms of biological role, sterol O-acyltransferase that catalyzes the formation of stery esters. This chain is Probable sterol O-acyltransferase 1 (are1), found in Schizosaccharomyces pombe (strain 972 / ATCC 24843) (Fission yeast).